Here is a 162-residue protein sequence, read N- to C-terminus: UPF0114 protein Sden_0436 (162 aa).

The next 3 membrane-spanning stretches (helical) occupy residues 15 to 35 (IMAP…IKFF), 53 to 73 (LVLI…LIMV), and 136 to 156 (IMWY…MGYL).

This sequence belongs to the UPF0114 family.

It is found in the cell membrane. This Shewanella denitrificans (strain OS217 / ATCC BAA-1090 / DSM 15013) protein is UPF0114 protein Sden_0436.